A 401-amino-acid polypeptide reads, in one-letter code: Imidazolonepropionase (401 aa).

The Fe(3+) site is built by histidine 66 and histidine 68. Zn(2+)-binding residues include histidine 66 and histidine 68. The 4-imidazolone-5-propanoate site is built by arginine 75, tyrosine 138, and histidine 171. An N-formimidoyl-L-glutamate-binding site is contributed by tyrosine 138. Histidine 236 provides a ligand contact to Fe(3+). Residue histidine 236 coordinates Zn(2+). Glutamine 239 contacts 4-imidazolone-5-propanoate. Aspartate 311 contributes to the Fe(3+) binding site. Aspartate 311 provides a ligand contact to Zn(2+). N-formimidoyl-L-glutamate-binding residues include asparagine 313 and glycine 315. 4-imidazolone-5-propanoate is bound at residue threonine 316.

Belongs to the metallo-dependent hydrolases superfamily. HutI family. Requires Zn(2+) as cofactor. It depends on Fe(3+) as a cofactor.

It localises to the cytoplasm. The catalysed reaction is 4-imidazolone-5-propanoate + H2O = N-formimidoyl-L-glutamate. It participates in amino-acid degradation; L-histidine degradation into L-glutamate; N-formimidoyl-L-glutamate from L-histidine: step 3/3. Its function is as follows. Catalyzes the hydrolytic cleavage of the carbon-nitrogen bond in imidazolone-5-propanoate to yield N-formimidoyl-L-glutamate. It is the third step in the universal histidine degradation pathway. This Acinetobacter baumannii (strain AB0057) protein is Imidazolonepropionase.